We begin with the raw amino-acid sequence, 681 residues long: Potassium-transporting ATPase ATP-binding subunit 1 (681 aa).

The next 4 membrane-spanning stretches (helical) occupy residues 30-50 (LLVYVGAILATSLYFLGFFGI), 59-79 (LAIALILWFTVLFANFAEAIA), 216-236 (ILLVTLSIIFLAVSATLLPFT), and 255-275 (IALLVCLAPTTIGALLSSIGI). The 4-aspartylphosphate intermediate role is filled by D306. ATP-binding positions include D343, E347, 376 to 383 (FTATTRMS), and K394. Mg(2+)-binding residues include D517 and D521. The next 3 membrane-spanning stretches (helical) occupy residues 587 to 607 (FAIIPVLFYGIFPQLEALNLM), 615 to 635 (AILSAIIYNAVIIIFLIPLSL), and 661 to 681 (LIAPFIAIKLIDMLLTVLGIV).

The protein belongs to the cation transport ATPase (P-type) (TC 3.A.3) family. Type IA subfamily. In terms of assembly, the system is composed of three essential subunits: KdpA, KdpB and KdpC.

The protein resides in the cell membrane. The enzyme catalyses K(+)(out) + ATP + H2O = K(+)(in) + ADP + phosphate + H(+). Functionally, part of the high-affinity ATP-driven potassium transport (or Kdp) system, which catalyzes the hydrolysis of ATP coupled with the electrogenic transport of potassium into the cytoplasm. This subunit is responsible for energy coupling to the transport system and for the release of the potassium ions to the cytoplasm. The protein is Potassium-transporting ATPase ATP-binding subunit 1 of Listeria innocua serovar 6a (strain ATCC BAA-680 / CLIP 11262).